The following is a 200-amino-acid chain: Glutathione S-transferase domain-containing protein DDB_G0273153/DDB_G0273923 (200 aa).

One can recognise a GST N-terminal domain in the interval 1–71; it reads MISSIYIFKI…YISNNHNFSG (71 aa). Positions 73-195 constitute a GST C-terminal domain; it reads SLQESARVDD…INSNNINSQS (123 aa).

This sequence belongs to the GST superfamily.

The protein is Glutathione S-transferase domain-containing protein DDB_G0273153/DDB_G0273923 of Dictyostelium discoideum (Social amoeba).